The chain runs to 186 residues: UPF0301 protein Saro_0683 (186 aa).

It belongs to the UPF0301 (AlgH) family.

This is UPF0301 protein Saro_0683 from Novosphingobium aromaticivorans (strain ATCC 700278 / DSM 12444 / CCUG 56034 / CIP 105152 / NBRC 16084 / F199).